Reading from the N-terminus, the 520-residue chain is Cytochrome P450 315a1, mitochondrial (520 aa).

Position 466 (C466) interacts with heme.

Belongs to the cytochrome P450 family. Heme serves as cofactor. Complex coexpression pattern of dib (disembodied) and sad (shade) in the early embryo that restricts to the prothoracic gland cells of the developing ring gland during late embryogenesis. In larvae and adult, coexpression is seen in prothoracic gland and follicle cells of the ovary. In adults, coexpression is seen in the follicle cells, sad only is expressed in nurse cells.

The protein resides in the mitochondrion membrane. The catalysed reaction is 2-deoxyecdysone + 2 reduced [adrenodoxin] + O2 + 2 H(+) = ecdysone + 2 oxidized [adrenodoxin] + H2O. It carries out the reaction 2,22-dideoxyecdysone + 2 reduced [adrenodoxin] + O2 + 2 H(+) = 22-deoxyecdysone + 2 oxidized [adrenodoxin] + H2O. The protein operates within steroid biosynthesis; ecdysteroid biosynthesis. Its function is as follows. Required for CNS development: midline glial cells. Involved in the metabolism of insect hormones: responsible for ecdysteroid C2-hydroxylase activity. May be involved in the breakdown of synthetic insecticides. This is Cytochrome P450 315a1, mitochondrial from Drosophila melanogaster (Fruit fly).